The sequence spans 258 residues: Phosphate import ATP-binding protein PstB (258 aa).

In terms of domain architecture, ABC transporter spans 5–247 (IDVSGLTAYY…SQIFSNPKEK (243 aa)). 37-44 (GPSGCGKS) contacts ATP.

This sequence belongs to the ABC transporter superfamily. Phosphate importer (TC 3.A.1.7) family. The complex is composed of two ATP-binding proteins (PstB), two transmembrane proteins (PstC and PstA) and a solute-binding protein (PstS).

The protein resides in the cell membrane. It catalyses the reaction phosphate(out) + ATP + H2O = ADP + 2 phosphate(in) + H(+). Functionally, part of the ABC transporter complex PstSACB involved in phosphate import. Responsible for energy coupling to the transport system. The sequence is that of Phosphate import ATP-binding protein PstB from Frankia casuarinae (strain DSM 45818 / CECT 9043 / HFP020203 / CcI3).